We begin with the raw amino-acid sequence, 318 residues long: NADH-ubiquinone oxidoreductase chain 1 (318 aa).

8 helical membrane passes run 2–22 (FTIN…FLTL), 70–90 (LYMA…TPLP), 98–118 (FNLG…SILW), 140–160 (ISYG…SGSF), 173–193 (WLLL…LAET), 217–237 (AGSF…MNAL), 253–273 (ELYT…FLWI), and 294–314 (LPLT…LSGI).

This sequence belongs to the complex I subunit 1 family.

It localises to the mitochondrion inner membrane. It carries out the reaction a ubiquinone + NADH + 5 H(+)(in) = a ubiquinol + NAD(+) + 4 H(+)(out). In terms of biological role, core subunit of the mitochondrial membrane respiratory chain NADH dehydrogenase (Complex I) that is believed to belong to the minimal assembly required for catalysis. Complex I functions in the transfer of electrons from NADH to the respiratory chain. The immediate electron acceptor for the enzyme is believed to be ubiquinone. This is NADH-ubiquinone oxidoreductase chain 1 (MT-ND1) from Sapajus apella (Brown-capped capuchin).